Here is a 529-residue protein sequence, read N- to C-terminus: Bifunctional purine biosynthesis protein PurH (529 aa).

Residues 1–148 (MQQRRPVRRA…KNHKDVAIVV (148 aa)) form the MGS-like domain.

It belongs to the PurH family.

It carries out the reaction (6R)-10-formyltetrahydrofolate + 5-amino-1-(5-phospho-beta-D-ribosyl)imidazole-4-carboxamide = 5-formamido-1-(5-phospho-D-ribosyl)imidazole-4-carboxamide + (6S)-5,6,7,8-tetrahydrofolate. It catalyses the reaction IMP + H2O = 5-formamido-1-(5-phospho-D-ribosyl)imidazole-4-carboxamide. The protein operates within purine metabolism; IMP biosynthesis via de novo pathway; 5-formamido-1-(5-phospho-D-ribosyl)imidazole-4-carboxamide from 5-amino-1-(5-phospho-D-ribosyl)imidazole-4-carboxamide (10-formyl THF route): step 1/1. It participates in purine metabolism; IMP biosynthesis via de novo pathway; IMP from 5-formamido-1-(5-phospho-D-ribosyl)imidazole-4-carboxamide: step 1/1. In Salmonella agona (strain SL483), this protein is Bifunctional purine biosynthesis protein PurH.